A 351-amino-acid polypeptide reads, in one-letter code: Probable dual-specificity RNA methyltransferase RlmN (351 aa).

The active-site Proton acceptor is glutamate 92. Residues 98 to 334 (SGDRLTVCVS…VRWSKGLGAD (237 aa)) enclose the Radical SAM core domain. A disulfide bridge connects residues cysteine 105 and cysteine 337. Residues cysteine 112, cysteine 116, and cysteine 119 each contribute to the [4Fe-4S] cluster site. Residues 159–160 (GE), serine 189, 218–220 (SLH), and asparagine 294 each bind S-adenosyl-L-methionine. The S-methylcysteine intermediate role is filled by cysteine 337.

It belongs to the radical SAM superfamily. RlmN family. It depends on [4Fe-4S] cluster as a cofactor.

It localises to the cytoplasm. It catalyses the reaction adenosine(2503) in 23S rRNA + 2 reduced [2Fe-2S]-[ferredoxin] + 2 S-adenosyl-L-methionine = 2-methyladenosine(2503) in 23S rRNA + 5'-deoxyadenosine + L-methionine + 2 oxidized [2Fe-2S]-[ferredoxin] + S-adenosyl-L-homocysteine. The catalysed reaction is adenosine(37) in tRNA + 2 reduced [2Fe-2S]-[ferredoxin] + 2 S-adenosyl-L-methionine = 2-methyladenosine(37) in tRNA + 5'-deoxyadenosine + L-methionine + 2 oxidized [2Fe-2S]-[ferredoxin] + S-adenosyl-L-homocysteine. Functionally, specifically methylates position 2 of adenine 2503 in 23S rRNA and position 2 of adenine 37 in tRNAs. The polypeptide is Probable dual-specificity RNA methyltransferase RlmN (Synechococcus sp. (strain ATCC 27144 / PCC 6301 / SAUG 1402/1) (Anacystis nidulans)).